Consider the following 328-residue polypeptide: tRNA dimethylallyltransferase (328 aa).

10–17 (GPTASGKT) provides a ligand contact to ATP. Residue 12 to 17 (TASGKT) coordinates substrate.

It belongs to the IPP transferase family. Monomer. Mg(2+) serves as cofactor.

It carries out the reaction adenosine(37) in tRNA + dimethylallyl diphosphate = N(6)-dimethylallyladenosine(37) in tRNA + diphosphate. Catalyzes the transfer of a dimethylallyl group onto the adenine at position 37 in tRNAs that read codons beginning with uridine, leading to the formation of N6-(dimethylallyl)adenosine (i(6)A). In Bifidobacterium longum subsp. infantis (strain ATCC 15697 / DSM 20088 / JCM 1222 / NCTC 11817 / S12), this protein is tRNA dimethylallyltransferase.